We begin with the raw amino-acid sequence, 541 residues long: Formimidoyltransferase-cyclodeaminase (541 aa).

Residues 1–181 (MSQLVECVPN…GATVTGARKF (181 aa)) are formiminotransferase N-subdomain. Catalysis depends on His82, which acts as the For formimidoyltransferase activity. 163 to 172 (GPSSFVPSWG) contributes to the folate binding site. The formiminotransferase C-subdomain stretch occupies residues 182–326 (LIAFNINLLS…PKERIIEYLV (145 aa)). The linker stretch occupies residues 327–334 (PDSGPEQS). A cyclodeaminase/cyclohydrolase region spans residues 335-541 (LLDASLRAFV…VLGSLEARKE (207 aa)). Asp412 (for cyclodeaminase activity) is an active-site residue. Phosphoserine is present on Ser520.

In the C-terminal section; belongs to the cyclodeaminase/cyclohydrolase family. The protein in the N-terminal section; belongs to the formiminotransferase family. As to quaternary structure, homooctamer, including four polyglutamate binding sites. The subunits are arranged as a tetramer of dimers, and form a planar ring-shaped structure. Specifically expressed in liver (at protein level).

The protein localises to the cytoplasm. Its subcellular location is the cytosol. The protein resides in the golgi apparatus. It localises to the cytoskeleton. It is found in the microtubule organizing center. The protein localises to the centrosome. Its subcellular location is the centriole. It catalyses the reaction 5-formimidoyltetrahydrofolate + L-glutamate = N-formimidoyl-L-glutamate + (6S)-5,6,7,8-tetrahydrofolate. The catalysed reaction is 5-formimidoyltetrahydrofolate + 2 H(+) = (6R)-5,10-methenyltetrahydrofolate + NH4(+). It functions in the pathway amino-acid degradation; L-histidine degradation into L-glutamate; L-glutamate from N-formimidoyl-L-glutamate (transferase route): step 1/1. Functionally, folate-dependent enzyme, that displays both transferase and deaminase activity. Serves to channel one-carbon units from formiminoglutamate to the folate pool. Binds and promotes bundling of vimentin filaments originating from the Golgi. The chain is Formimidoyltransferase-cyclodeaminase (Ftcd) from Rattus norvegicus (Rat).